We begin with the raw amino-acid sequence, 725 residues long: Ribosomal RNA large subunit methyltransferase K/L (725 aa).

Positions 45–156 (SGYRACLWSR…RGRLSLGIDL (112 aa)) constitute a THUMP domain.

It belongs to the methyltransferase superfamily. RlmKL family.

The protein localises to the cytoplasm. The enzyme catalyses guanosine(2445) in 23S rRNA + S-adenosyl-L-methionine = N(2)-methylguanosine(2445) in 23S rRNA + S-adenosyl-L-homocysteine + H(+). It carries out the reaction guanosine(2069) in 23S rRNA + S-adenosyl-L-methionine = N(2)-methylguanosine(2069) in 23S rRNA + S-adenosyl-L-homocysteine + H(+). Specifically methylates the guanine in position 2445 (m2G2445) and the guanine in position 2069 (m7G2069) of 23S rRNA. This is Ribosomal RNA large subunit methyltransferase K/L from Marinobacter nauticus (strain ATCC 700491 / DSM 11845 / VT8) (Marinobacter aquaeolei).